The following is a 351-amino-acid chain: UDP-N-acetylglucosamine--N-acetylmuramyl-(pentapeptide) pyrophosphoryl-undecaprenol N-acetylglucosamine transferase (351 aa).

Residues 12 to 14 (TGG), Asn124, Arg160, Ser188, Ile239, 258 to 263 (ALTVCE), and Gln283 contribute to the UDP-N-acetyl-alpha-D-glucosamine site.

This sequence belongs to the glycosyltransferase 28 family. MurG subfamily.

It is found in the cell inner membrane. It carries out the reaction di-trans,octa-cis-undecaprenyl diphospho-N-acetyl-alpha-D-muramoyl-L-alanyl-D-glutamyl-meso-2,6-diaminopimeloyl-D-alanyl-D-alanine + UDP-N-acetyl-alpha-D-glucosamine = di-trans,octa-cis-undecaprenyl diphospho-[N-acetyl-alpha-D-glucosaminyl-(1-&gt;4)]-N-acetyl-alpha-D-muramoyl-L-alanyl-D-glutamyl-meso-2,6-diaminopimeloyl-D-alanyl-D-alanine + UDP + H(+). The protein operates within cell wall biogenesis; peptidoglycan biosynthesis. Functionally, cell wall formation. Catalyzes the transfer of a GlcNAc subunit on undecaprenyl-pyrophosphoryl-MurNAc-pentapeptide (lipid intermediate I) to form undecaprenyl-pyrophosphoryl-MurNAc-(pentapeptide)GlcNAc (lipid intermediate II). The chain is UDP-N-acetylglucosamine--N-acetylmuramyl-(pentapeptide) pyrophosphoryl-undecaprenol N-acetylglucosamine transferase from Actinobacillus pleuropneumoniae serotype 7 (strain AP76).